Reading from the N-terminus, the 184-residue chain is Photosystem I assembly protein Ycf4 (184 aa).

2 helical membrane passes run 25 to 45 (ACIL…SYLG) and 57 to 77 (ILFV…LFIS).

The protein belongs to the Ycf4 family.

Its subcellular location is the plastid. It is found in the chloroplast thylakoid membrane. Seems to be required for the assembly of the photosystem I complex. The chain is Photosystem I assembly protein Ycf4 from Cycas taitungensis (Prince sago).